A 573-amino-acid chain; its full sequence is Pyrophosphate--fructose 6-phosphate 1-phosphotransferase (573 aa).

Gly-90 contributes to the diphosphate binding site. Asp-184 is a Mg(2+) binding site. Substrate is bound by residues 212-214, 251-252, 259-261, Glu-320, and 434-437; these read TID, KY, MGR, and YEGR. Asp-214 functions as the Proton acceptor in the catalytic mechanism.

The protein belongs to the phosphofructokinase type A (PFKA) family. PPi-dependent PFK group II subfamily. Clade 'Long' sub-subfamily. In terms of assembly, homodimer. Mg(2+) is required as a cofactor.

Its subcellular location is the cytoplasm. It carries out the reaction beta-D-fructose 6-phosphate + diphosphate = beta-D-fructose 1,6-bisphosphate + phosphate + H(+). The protein operates within carbohydrate degradation; glycolysis; D-glyceraldehyde 3-phosphate and glycerone phosphate from D-glucose: step 3/4. Its activity is regulated as follows. Non-allosteric. Catalyzes the phosphorylation of D-fructose 6-phosphate, the first committing step of glycolysis. Uses inorganic phosphate (PPi) as phosphoryl donor instead of ATP like common ATP-dependent phosphofructokinases (ATP-PFKs), which renders the reaction reversible, and can thus function both in glycolysis and gluconeogenesis. Consistently, PPi-PFK can replace the enzymes of both the forward (ATP-PFK) and reverse (fructose-bisphosphatase (FBPase)) reactions. This Treponema pallidum (strain Nichols) protein is Pyrophosphate--fructose 6-phosphate 1-phosphotransferase.